Here is a 430-residue protein sequence, read N- to C-terminus: Trigger factor (430 aa).

One can recognise a PPIase FKBP-type domain in the interval 157-242; it reads GDLVALETWS…AVEVSEPVLP (86 aa).

This sequence belongs to the FKBP-type PPIase family. Tig subfamily.

It is found in the cytoplasm. The enzyme catalyses [protein]-peptidylproline (omega=180) = [protein]-peptidylproline (omega=0). Functionally, involved in protein export. Acts as a chaperone by maintaining the newly synthesized protein in an open conformation. Functions as a peptidyl-prolyl cis-trans isomerase. The polypeptide is Trigger factor (Xanthomonas oryzae pv. oryzae (strain MAFF 311018)).